Consider the following 336-residue polypeptide: Glycerol-3-phosphate dehydrogenase [NAD(P)+] (336 aa).

Residues Ser-11, Trp-12, Arg-33, Arg-34, and Lys-107 each coordinate NADPH. Residues Lys-107 and Gly-137 each coordinate sn-glycerol 3-phosphate. Ala-141 contributes to the NADPH binding site. Positions 192, 245, 255, 256, and 257 each coordinate sn-glycerol 3-phosphate. Residue Lys-192 is the Proton acceptor of the active site. Position 256 (Arg-256) interacts with NADPH. Glu-282 is an NADPH binding site.

The protein belongs to the NAD-dependent glycerol-3-phosphate dehydrogenase family.

It localises to the cytoplasm. The catalysed reaction is sn-glycerol 3-phosphate + NAD(+) = dihydroxyacetone phosphate + NADH + H(+). It catalyses the reaction sn-glycerol 3-phosphate + NADP(+) = dihydroxyacetone phosphate + NADPH + H(+). It functions in the pathway membrane lipid metabolism; glycerophospholipid metabolism. Its function is as follows. Catalyzes the reduction of the glycolytic intermediate dihydroxyacetone phosphate (DHAP) to sn-glycerol 3-phosphate (G3P), the key precursor for phospholipid synthesis. This is Glycerol-3-phosphate dehydrogenase [NAD(P)+] from Thermobifida fusca (strain YX).